A 364-amino-acid chain; its full sequence is Dimethylsulfoniopropionate demethylase DmdA (364 aa).

This sequence belongs to the GcvT family. DmdA subfamily.

It carries out the reaction S,S-dimethyl-beta-propiothetin + (6S)-5,6,7,8-tetrahydrofolate = 3-(methylsulfanyl)propanoate + (6S)-5-methyl-5,6,7,8-tetrahydrofolate + H(+). Involved in the assimilation of dimethylsulphoniopropionate (DMSP), an important compound in the fixation of carbon in marine phytoplankton, by mediating demethylation of dimethylsulfoniopropionate (DMSP) to methyl-mercaptopropionate (MMPA). The intracellular concentration of DMSP is estimated to be 70 mM. The protein is Dimethylsulfoniopropionate demethylase DmdA of Ruegeria pomeroyi (strain ATCC 700808 / DSM 15171 / DSS-3) (Silicibacter pomeroyi).